We begin with the raw amino-acid sequence, 232 residues long: Large ribosomal subunit protein uL1 (232 aa).

It belongs to the universal ribosomal protein uL1 family. Part of the 50S ribosomal subunit.

Its function is as follows. Binds directly to 23S rRNA. The L1 stalk is quite mobile in the ribosome, and is involved in E site tRNA release. Functionally, protein L1 is also a translational repressor protein, it controls the translation of the L11 operon by binding to its mRNA. The polypeptide is Large ribosomal subunit protein uL1 (Bacillus velezensis (strain DSM 23117 / BGSC 10A6 / LMG 26770 / FZB42) (Bacillus amyloliquefaciens subsp. plantarum)).